We begin with the raw amino-acid sequence, 420 residues long: Glucose-1-phosphate adenylyltransferase (420 aa).

Alpha-D-glucose 1-phosphate-binding positions include Tyr107, Gly172, 187 to 188 (EK), and Ser205.

This sequence belongs to the bacterial/plant glucose-1-phosphate adenylyltransferase family. Homotetramer.

It catalyses the reaction alpha-D-glucose 1-phosphate + ATP + H(+) = ADP-alpha-D-glucose + diphosphate. Its pathway is glycan biosynthesis; glycogen biosynthesis. Involved in the biosynthesis of ADP-glucose, a building block required for the elongation reactions to produce glycogen. Catalyzes the reaction between ATP and alpha-D-glucose 1-phosphate (G1P) to produce pyrophosphate and ADP-Glc. In Bradyrhizobium diazoefficiens (strain JCM 10833 / BCRC 13528 / IAM 13628 / NBRC 14792 / USDA 110), this protein is Glucose-1-phosphate adenylyltransferase.